Consider the following 425-residue polypeptide: Glutamyl-tRNA reductase (425 aa).

Substrate-binding positions include 49–52 (TCNR), serine 107, 112–114 (EPQ), and glutamine 118. Cysteine 50 acts as the Nucleophile in catalysis. 187 to 192 (GAGETI) is an NADP(+) binding site.

Belongs to the glutamyl-tRNA reductase family. As to quaternary structure, homodimer.

It carries out the reaction (S)-4-amino-5-oxopentanoate + tRNA(Glu) + NADP(+) = L-glutamyl-tRNA(Glu) + NADPH + H(+). It participates in porphyrin-containing compound metabolism; protoporphyrin-IX biosynthesis; 5-aminolevulinate from L-glutamyl-tRNA(Glu): step 1/2. In terms of biological role, catalyzes the NADPH-dependent reduction of glutamyl-tRNA(Glu) to glutamate 1-semialdehyde (GSA). The chain is Glutamyl-tRNA reductase from Pseudomonas putida (strain W619).